The primary structure comprises 178 residues: Long polar fimbria protein A (178 aa).

The N-terminal stretch at 1–24 (MEFLMKKVVFALSALAVVSTSAFA) is a signal peptide.

It belongs to the fimbrial protein family.

It is found in the fimbrium. The polypeptide is Long polar fimbria protein A (lpfA) (Salmonella typhimurium (strain LT2 / SGSC1412 / ATCC 700720)).